A 250-amino-acid polypeptide reads, in one-letter code: Homeobox protein Dlx4a (250 aa).

Positions 123–182 (IRKPRTIYSSLQLQALNQRFQQTQYLALPERADLAAKLGLTQTQVKIWFQNKRSKYKKIM) form a DNA-binding region, homeobox. The segment at 182 to 202 (MKHGSSGPEGEHLQAASASGA) is disordered.

This sequence belongs to the distal-less homeobox family.

Its subcellular location is the nucleus. The protein is Homeobox protein Dlx4a (dlx4a) of Danio rerio (Zebrafish).